The chain runs to 228 residues: ATP-dependent dethiobiotin synthetase BioD 1 (228 aa).

13-18 (EVGKTV) is an ATP binding site. Threonine 17 is a binding site for Mg(2+). Lysine 38 is an active-site residue. Serine 42 serves as a coordination point for substrate. ATP contacts are provided by residues aspartate 55, 116 to 119 (EGAG), 176 to 177 (ND), and 205 to 207 (PWL). The Mg(2+) site is built by aspartate 55 and glutamate 116.

Belongs to the dethiobiotin synthetase family. As to quaternary structure, homodimer. The cofactor is Mg(2+).

The protein localises to the cytoplasm. The enzyme catalyses (7R,8S)-7,8-diammoniononanoate + CO2 + ATP = (4R,5S)-dethiobiotin + ADP + phosphate + 3 H(+). Its pathway is cofactor biosynthesis; biotin biosynthesis; biotin from 7,8-diaminononanoate: step 1/2. Catalyzes a mechanistically unusual reaction, the ATP-dependent insertion of CO2 between the N7 and N8 nitrogen atoms of 7,8-diaminopelargonic acid (DAPA, also called 7,8-diammoniononanoate) to form a ureido ring. In Salmonella typhi, this protein is ATP-dependent dethiobiotin synthetase BioD 1.